The primary structure comprises 72 residues: Rubredoxin (72 aa).

Positions 19 to 72 constitute a Rubredoxin-like domain; the sequence is DAVLECKICWQRYDPAEGDPVWQIPPGTPFAALPAHWRCPRCDGDREQFMVVDG. Fe cation contacts are provided by C24, C27, C57, and C60.

The protein belongs to the rubredoxin family. Requires Fe(3+) as cofactor.

Rubredoxin is a small nonheme, iron protein lacking acid-labile sulfide. Its single Fe, chelated to 4 Cys, functions as an electron acceptor and may also stabilize the conformation of the molecule. Could be involved in hydrogenase-linked redox processes. In Azotobacter vinelandii, this protein is Rubredoxin (hoxR).